A 177-amino-acid polypeptide reads, in one-letter code: Interleukin-19 (177 aa).

Positions 1 to 24 are cleaved as a signal peptide; that stretch reads MKLQCVSLWLLGTILILCSVDNHG. 3 disulfide bridges follow: Cys28/Cys121, Cys75/Cys127, and Cys76/Cys129. The N-linked (GlcNAc...) asparagine glycan is linked to Asn56. N-linked (GlcNAc...) asparagine glycosylation is present at Asn135.

It belongs to the IL-10 family.

It localises to the secreted. In terms of biological role, cytokine that functions as an anti-inflammatory and proangiogenic factor. Polarizes adaptive immunity to an anti-inflammatory phenotype through induction of T-helper 2 responses by both down-regulation of IFN-gamma and up-regulation of IL4 and IL13. Produced by osteocytes, stimulates granulopoiesis and neutrophil formation. Exerts its biological effect through a receptor complex consisting of a heterodimer of IL20RA and IL20RB. In turn, activates the Janus kinase (JAK) and signal transducer and activator of transcription (STAT) pathway, and importantly, STAT3. The polypeptide is Interleukin-19 (IL19) (Homo sapiens (Human)).